Reading from the N-terminus, the 599-residue chain is NADH-quinone oxidoreductase subunit C/D (599 aa).

The tract at residues 1–189 (MTDLTTHDLA…DPFVLTKQKE (189 aa)) is NADH dehydrogenase I subunit C. The segment at 213–599 (DFMFLNLGPN…IDFVMSDVDR (387 aa)) is NADH dehydrogenase I subunit D.

The protein in the N-terminal section; belongs to the complex I 30 kDa subunit family. In the C-terminal section; belongs to the complex I 49 kDa subunit family. NDH-1 is composed of 13 different subunits. Subunits NuoB, CD, E, F, and G constitute the peripheral sector of the complex.

It localises to the cell inner membrane. It carries out the reaction a quinone + NADH + 5 H(+)(in) = a quinol + NAD(+) + 4 H(+)(out). In terms of biological role, NDH-1 shuttles electrons from NADH, via FMN and iron-sulfur (Fe-S) centers, to quinones in the respiratory chain. The immediate electron acceptor for the enzyme in this species is believed to be ubiquinone. Couples the redox reaction to proton translocation (for every two electrons transferred, four hydrogen ions are translocated across the cytoplasmic membrane), and thus conserves the redox energy in a proton gradient. This is NADH-quinone oxidoreductase subunit C/D from Pectobacterium carotovorum subsp. carotovorum (strain PC1).